The following is a 269-amino-acid chain: Tryptophan synthase alpha chain (269 aa).

Active-site proton acceptor residues include Glu-49 and Asp-60.

This sequence belongs to the TrpA family. Tetramer of two alpha and two beta chains.

The enzyme catalyses (1S,2R)-1-C-(indol-3-yl)glycerol 3-phosphate + L-serine = D-glyceraldehyde 3-phosphate + L-tryptophan + H2O. It participates in amino-acid biosynthesis; L-tryptophan biosynthesis; L-tryptophan from chorismate: step 5/5. In terms of biological role, the alpha subunit is responsible for the aldol cleavage of indoleglycerol phosphate to indole and glyceraldehyde 3-phosphate. This Salmonella arizonae (strain ATCC BAA-731 / CDC346-86 / RSK2980) protein is Tryptophan synthase alpha chain.